Consider the following 213-residue polypeptide: Motile sperm domain-containing protein 1 (213 aa).

The region spanning 16–143 is the MSP domain; the sequence is PVFVFPTELI…KEHLTESVFF (128 aa). A run of 2 helical transmembrane segments spans residues 159 to 179 and 191 to 211; these read SLLT…PTLG and LSVN…MAIL. Residues 205–208 carry the Nuclear export signal motif; it reads LITM.

Its subcellular location is the endoplasmic reticulum membrane. The protein resides in the golgi apparatus membrane. Plays a role in differentiation and/or proliferation of mesenchymal stem cells. Proposed to be involved in epithelial-to-mesenchymal transition (EMT). However, another study suggests that it is not required for EMT or stem cell self-renewal and acts during later stages of differentiation. The protein is Motile sperm domain-containing protein 1 (Mospd1) of Rattus norvegicus (Rat).